The sequence spans 257 residues: Putative carboxymethylenebutenolidase (257 aa).

Residues C148, D195, and H226 contribute to the active site.

Belongs to the dienelactone hydrolase family.

The catalysed reaction is 2-(5-oxo-2,5-dihydrofuran-2-ylidene)acetate + H2O = 4-oxohex-2-enedioate + H(+). The sequence is that of Putative carboxymethylenebutenolidase from Saccharolobus solfataricus (strain ATCC 35092 / DSM 1617 / JCM 11322 / P2) (Sulfolobus solfataricus).